We begin with the raw amino-acid sequence, 75 residues long: Small ribosomal subunit protein bS18 (75 aa).

Over residues 1–11 (MAAKPFFRRRK) the composition is skewed to basic residues. The segment at 1-21 (MAAKPFFRRRKTDPFEGENAP) is disordered.

The protein belongs to the bacterial ribosomal protein bS18 family. Part of the 30S ribosomal subunit. Forms a tight heterodimer with protein bS6.

In terms of biological role, binds as a heterodimer with protein bS6 to the central domain of the 16S rRNA, where it helps stabilize the platform of the 30S subunit. This chain is Small ribosomal subunit protein bS18, found in Jannaschia sp. (strain CCS1).